The sequence spans 186 residues: UPF0301 protein LHK_02881 (186 aa).

This sequence belongs to the UPF0301 (AlgH) family.

This chain is UPF0301 protein LHK_02881, found in Laribacter hongkongensis (strain HLHK9).